Here is a 166-residue protein sequence, read N- to C-terminus: Lipoprotein signal peptidase (166 aa).

The next 3 helical transmembrane spans lie at 12–32, 70–90, and 102–122; these read WLWL…LILQ, WFFA…MYRS, and ALII…GFVV. Catalysis depends on residues Asp123 and Asp141. The helical transmembrane segment at 137 to 157 threads the bilayer; sequence FNLADTAICIGAALIVLEGFL.

Belongs to the peptidase A8 family.

The protein resides in the cell inner membrane. It catalyses the reaction Release of signal peptides from bacterial membrane prolipoproteins. Hydrolyzes -Xaa-Yaa-Zaa-|-(S,diacylglyceryl)Cys-, in which Xaa is hydrophobic (preferably Leu), and Yaa (Ala or Ser) and Zaa (Gly or Ala) have small, neutral side chains.. The protein operates within protein modification; lipoprotein biosynthesis (signal peptide cleavage). Functionally, this protein specifically catalyzes the removal of signal peptides from prolipoproteins. In Salmonella paratyphi A (strain ATCC 9150 / SARB42), this protein is Lipoprotein signal peptidase.